The following is a 120-amino-acid chain: Chaperonin GroEL (120 aa).

An ATP-binding site is contributed by 23–27 (DGTTT).

This sequence belongs to the chaperonin (HSP60) family. In terms of assembly, forms a cylinder of 14 subunits composed of two heptameric rings stacked back-to-back. Interacts with the co-chaperonin GroES.

The protein resides in the cytoplasm. It catalyses the reaction ATP + H2O + a folded polypeptide = ADP + phosphate + an unfolded polypeptide.. Functionally, together with its co-chaperonin GroES, plays an essential role in assisting protein folding. The GroEL-GroES system forms a nano-cage that allows encapsulation of the non-native substrate proteins and provides a physical environment optimized to promote and accelerate protein folding. This is Chaperonin GroEL from Mycobacterium asiaticum.